Reading from the N-terminus, the 2472-residue chain is Spectrin alpha chain, non-erythrocytic 1 (2472 aa).

Residue methionine 1 is modified to N-acetylmethionine. Spectrin repeat units lie at residues arginine 45–leucine 146, lysine 150–leucine 251, glutamate 256–asparagine 358, tyrosine 361–glutamine 465, aspartate 468–alanine 570, histidine 574–glutamate 676, glutamine 679–alanine 781, arginine 785–aspartate 888, and glutamine 891–lysine 969. Residue serine 587 is modified to Phosphoserine. Lysine 637 is modified (N6-acetyllysine). Lysine 803 carries the N6-acetyllysine modification. Serine 924, serine 982, serine 999, serine 1029, serine 1031, and serine 1041 each carry phosphoserine. The SH3 domain occupies threonine 967–proline 1026. One copy of the Spectrin 10 repeat lies at leucine 1096–glutamate 1166. Tyrosine 1176 carries the post-translational modification Phosphotyrosine. Residues serine 1190, serine 1207, serine 1217, serine 1291, serine 1306, serine 1323, and serine 1338 each carry the phosphoserine modification. One copy of the Spectrin 11 repeat lies at histidine 1233–glycine 1336. 2 Spectrin repeats span residues histidine 1339 to aspartate 1442 and glutamate 1446 to glutamate 1549. Lysine 1519 is subject to N6-acetyllysine. Phosphoserine is present on residues serine 1550, serine 1557, serine 1578, serine 1615, and serine 1647. Spectrin repeat units lie at residues threonine 1552–glutamate 1656, lysine 1659–glutamate 1762, histidine 1764–glutamate 1868, glutamate 1871–glutamate 1974, phenylalanine 1978–glutamate 2081, leucine 2092–glutamine 2194, and leucine 2206–glutamine 2310. Residue threonine 2020 is modified to Phosphothreonine. N6-acetyllysine is present on lysine 2052. EF-hand domains follow at residues glutamate 2323–aspartate 2358, glutamate 2366–glutamate 2401, and lysine 2404–aspartate 2439. Residues aspartate 2336, aspartate 2338, serine 2340, arginine 2342, glutamate 2347, aspartate 2379, asparagine 2381, aspartate 2383, histidine 2385, and glutamate 2390 each contribute to the Ca(2+) site. N6-acetyllysine is present on lysine 2421.

Belongs to the spectrin family. Like erythrocyte spectrin, the spectrin-like proteins are capable of forming dimers which can further associate to tetramers. Interacts (via C-terminal spectrin repeats) with TRPC4. Interacts with CALM and EMD. Interacts with isoform 1 of ACP1. Identified in a complex with ACTN4, CASK, IQGAP1, MAGI2, NPHS1 and SPTBN1. Interacts with SHANK3 (via ANK repeats). Interacts with CLN3; this interaction regulates the fodrin localization at the plasma membrane. In terms of processing, phosphorylation of Tyr-1176 decreases sensitivity to cleavage by calpain in vitro.

It localises to the cytoplasm. It is found in the cytoskeleton. The protein resides in the cell cortex. Functionally, fodrin, which seems to be involved in secretion, interacts with calmodulin in a calcium-dependent manner and is thus candidate for the calcium-dependent movement of the cytoskeleton at the membrane. This is Spectrin alpha chain, non-erythrocytic 1 (SPTAN1) from Homo sapiens (Human).